The chain runs to 110 residues: Coiled-coil-helix-coiled-coil-helix domain-containing protein 5 (110 aa).

Position 1 is an N-acetylmethionine (M1). CHCH domains follow at residues 9–52 (ARYC…PIIR) and 55–97 (RQAC…QPPR). 4 short sequence motifs (cx9C motif) span residues 12–22 (CGRELEQYGQC), 34–44 (CHYLKMSIAQC), 58–68 (CAQPFEAFEEC), and 79–89 (CAEHMRRFLQC). Disulfide bonds link C12-C44, C22-C34, C58-C89, and C68-C79.

In terms of assembly, monomer.

The protein localises to the mitochondrion intermembrane space. In Homo sapiens (Human), this protein is Coiled-coil-helix-coiled-coil-helix domain-containing protein 5 (CHCHD5).